A 414-amino-acid chain; its full sequence is MSLESFDKDIYSLVNKELERQCDHLEMIASENFTYPDVMEVMGSVLTNKYAEGYPSKRYYGGCEFVDEIEQIAIDRCKKLFGCEFANVQPNSGSQANQGVYGAFLKPGDKILGMDLSHGGHLTHGSKVSSSGKNYESFFYGVELDGRINYNKVEEIANITKPKMIVCGASAYAREIDFKKFREIADSVGAYLFADVAHIAGLVVAGEHNNPFPHCHVVSSTTHKTLRGPRGGIIMTNDEEFAKKINSSIFPGIQGGPLMHVIAGKAVGFKHNLSDEWKVYAKQVKTNAKKLGEVLINRGYDLVSGGTDNHLVLVSFLNKEFSGKDADIALGNAGITVNKNTVPGETRSPFITSGIRVGSPALTARGMKESEFELIANRIADVLDDIDNSSKQEKIKAELKELAHQFIIYDKAMF.

(6S)-5,6,7,8-tetrahydrofolate is bound by residues leucine 116 and 120 to 122 (GHL). At lysine 224 the chain carries N6-(pyridoxal phosphate)lysine. (6S)-5,6,7,8-tetrahydrofolate is bound by residues glutamate 240 and 348–350 (SPF).

It belongs to the SHMT family. Homodimer. Pyridoxal 5'-phosphate is required as a cofactor.

The protein localises to the cytoplasm. The catalysed reaction is (6R)-5,10-methylene-5,6,7,8-tetrahydrofolate + glycine + H2O = (6S)-5,6,7,8-tetrahydrofolate + L-serine. It participates in one-carbon metabolism; tetrahydrofolate interconversion. It functions in the pathway amino-acid biosynthesis; glycine biosynthesis; glycine from L-serine: step 1/1. In terms of biological role, catalyzes the reversible interconversion of serine and glycine with tetrahydrofolate (THF) serving as the one-carbon carrier. This reaction serves as the major source of one-carbon groups required for the biosynthesis of purines, thymidylate, methionine, and other important biomolecules. Also exhibits THF-independent aldolase activity toward beta-hydroxyamino acids, producing glycine and aldehydes, via a retro-aldol mechanism. In Campylobacter fetus subsp. fetus (strain 82-40), this protein is Serine hydroxymethyltransferase.